The primary structure comprises 374 residues: Ribosomal RNA large subunit methyltransferase G (374 aa).

It belongs to the methyltransferase superfamily. RlmG family.

It localises to the cytoplasm. It carries out the reaction guanosine(1835) in 23S rRNA + S-adenosyl-L-methionine = N(2)-methylguanosine(1835) in 23S rRNA + S-adenosyl-L-homocysteine + H(+). Its function is as follows. Specifically methylates the guanine in position 1835 (m2G1835) of 23S rRNA. In Pseudomonas paraeruginosa (strain DSM 24068 / PA7) (Pseudomonas aeruginosa (strain PA7)), this protein is Ribosomal RNA large subunit methyltransferase G.